The primary structure comprises 312 residues: uncharacterized protein (312 aa).

Basic and acidic residues-rich tracts occupy residues 1–17 and 28–39; these read MAKY…EQLE and PDRDGPRHSAKL. Residues 1–39 are disordered; it reads MAKYDHLELVRLPEQLERRKHGGGSPPPDRDGPRHSAKL.

This is an uncharacterized protein from Sinorhizobium fredii (strain NBRC 101917 / NGR234).